The following is a 370-amino-acid chain: uncharacterized protein (370 aa).

Lysine 207 is subject to N6-(pyridoxal phosphate)lysine.

It belongs to the class-V pyridoxal-phosphate-dependent aminotransferase family. The cofactor is pyridoxal 5'-phosphate.

This is an uncharacterized protein from Bacillus subtilis (strain 168).